An 89-amino-acid chain; its full sequence is Antimicrobial peptide Ar-AMP (89 aa).

A signal peptide spans 1 to 25 (MVNMKSVALIVIVMMAFMMVDPSMG). In terms of domain architecture, Chitin-binding type-1 spans 26–68 (AGECVQGRCPSGMCCSQFGYCGRGPKYCGRASTTVDHQADAAA). 3 disulfides stabilise this stretch: cysteine 29/cysteine 40, cysteine 34/cysteine 46, and cysteine 39/cysteine 53. A propeptide spans 56–89 (ASTTVDHQADAAAAAATKTANNPTDAKLAGAGSP) (removed in mature form).

Functionally, chitin-binding protein that inhibits the growth of the fungal pathogens B.cinerea, F.culmorum, H.sativum and A.consortiale, but not that of R.solani. Induces morphological changes in the fungal pathogens F.culmorum, H.sativum and R.solani, but not in A.consortiale and B.cinerea. Has antibacterial activity against the Gram-positive bacterium B.subtilis, but lacks antibacterial activity against the Gram-negative bacterium E.coli. In Amaranthus retroflexus (Redroot amaranth), this protein is Antimicrobial peptide Ar-AMP.